Reading from the N-terminus, the 484-residue chain is Serine/arginine-rich splicing factor 11 (484 aa).

A disordered region spans residues 1 to 33 (MSNTTVVPSTAGPGPSGGPGGGGGGGGGGGGTE). The residue at position 2 (serine 2) is an N-acetylserine. The span at 14–32 (GPSGGPGGGGGGGGGGGGT) shows a compositional bias: gly residues. An RRM domain is found at 33-113 (EVIQVTNVSP…ALIVVPYAEG (81 aa)). Lysine 197 participates in a covalent cross-link: Glycyl lysine isopeptide (Lys-Gly) (interchain with G-Cter in SUMO2). Residue serine 207 is modified to Phosphoserine. Lysine 211 is covalently cross-linked (Glycyl lysine isopeptide (Lys-Gly) (interchain with G-Cter in SUMO2)). A Phosphoserine modification is found at serine 212. The tract at residues 233 to 484 (ISAAIEPDKK…HHEEDMDMSD (252 aa)) is disordered. Basic residues predominate over residues 244 to 308 (EKRRHSRSRS…ERGRRSRSTS (65 aa)). 10 consecutive repeat copies span residues 247-255 (RHSRSRSRS), 258-265 (RRTPSSSR), 267-274 (RRSRSRSR), 275-282 (RRSHSKSR), 285-292 (RRSKSPRR), 293-300 (RRSHSRER), 302-309 (RRSRSTSK), 321-328 (KRSKTPPK), 334-341 (RRSRSASR), and 346-353 (RRSRSGTR). A 10 X 8 AA approximate repeats of R-R-S-R-S-R-S-R region spans residues 247–353 (RHSRSRSRSR…RRRRSRSGTR (107 aa)). Over residues 309–320 (KTRDKKKEDKEK) the composition is skewed to basic and acidic residues. Residue serine 323 is modified to Phosphoserine. At threonine 325 the chain carries Phosphothreonine. Over residues 334-379 (RRSRSASRERRRRRSRSGTRSPKKPRSPKRKLSRSPSPRRHKKEKK) the composition is skewed to basic residues. 3 stretches are compositionally biased toward basic and acidic residues: residues 380–395 (KDKD…ERST), 402–424 (KDKE…VTRD), and 433–478 (DSEK…HHEE). Phosphoserine is present on residues serine 414 and serine 434. Threonine 447 carries the post-translational modification Phosphothreonine. A phosphoserine mark is found at serine 449, serine 456, serine 464, and serine 483.

This sequence belongs to the splicing factor SR family. As to quaternary structure, interacts with PUF60.

The protein localises to the nucleus. In terms of biological role, may function in pre-mRNA splicing. This is Serine/arginine-rich splicing factor 11 (SRSF11) from Homo sapiens (Human).